Here is a 96-residue protein sequence, read N- to C-terminus: Co-chaperonin GroES (96 aa).

Belongs to the GroES chaperonin family. As to quaternary structure, heptamer of 7 subunits arranged in a ring. Interacts with the chaperonin GroEL.

It is found in the cytoplasm. Functionally, together with the chaperonin GroEL, plays an essential role in assisting protein folding. The GroEL-GroES system forms a nano-cage that allows encapsulation of the non-native substrate proteins and provides a physical environment optimized to promote and accelerate protein folding. GroES binds to the apical surface of the GroEL ring, thereby capping the opening of the GroEL channel. The sequence is that of Co-chaperonin GroES from Actinobacillus pleuropneumoniae serotype 3 (strain JL03).